The chain runs to 201 residues: Potassium-transporting ATPase KdpC subunit (201 aa).

Residues proline 7–glycine 29 traverse the membrane as a helical segment.

The protein belongs to the KdpC family. The system is composed of three essential subunits: KdpA, KdpB and KdpC.

It is found in the cell inner membrane. Its function is as follows. Part of the high-affinity ATP-driven potassium transport (or Kdp) system, which catalyzes the hydrolysis of ATP coupled with the electrogenic transport of potassium into the cytoplasm. This subunit acts as a catalytic chaperone that increases the ATP-binding affinity of the ATP-hydrolyzing subunit KdpB by the formation of a transient KdpB/KdpC/ATP ternary complex. The polypeptide is Potassium-transporting ATPase KdpC subunit (Methylobacterium radiotolerans (strain ATCC 27329 / DSM 1819 / JCM 2831 / NBRC 15690 / NCIMB 10815 / 0-1)).